The chain runs to 1496 residues: Synaptojanin-2 (1496 aa).

The 325-residue stretch at 120–444 (LKKILSSGVF…GHGLSKVFTG (325 aa)) folds into the SAC domain. Positions 906 to 985 (DATVIVNLQS…RAVKIRPKTK (80 aa)) constitute an RRM domain. Disordered stretches follow at residues 1047-1083 (VVSD…HPTY), 1100-1149 (GNFR…GTHG), 1205-1357 (VPES…LQVL), 1393-1413 (SSAI…AASF), 1442-1461 (EPLD…SAQV), and 1468-1496 (RGLP…TLGV). Over residues 1063 to 1074 (SASTPASKSPAL) the composition is skewed to low complexity. The segment covering 1116–1130 (RPRPPHPPQRPPPPT) has biased composition (pro residues). Ser1139 carries the phosphoserine modification. Polar residues predominate over residues 1139 to 1149 (SDASISSGTHG). 2 stretches are compositionally biased toward pro residues: residues 1230–1239 (PVLPRRPVPR) and 1279–1292 (TPPP…PVPK). The segment covering 1324 to 1338 (ELSSPEAPEAPSLAP) has biased composition (low complexity). Basic and acidic residues-rich tracts occupy residues 1470 to 1480 (LPPDHGGKDFS) and 1487 to 1496 (NKDKRTTLGV).

Belongs to the synaptojanin family. This sequence in the central section; belongs to the inositol 1,4,5-trisphosphate 5-phosphatase family. As to quaternary structure, binds to GRB2. Isoform 2A binds to SYNJ2BP/OMP25. In terms of tissue distribution, widely expressed. Isoforms 2B1 and 2B2 are concentrated at nerve terminals in brain and at spermatid manchette in testis.

The protein localises to the cytoplasm. It localises to the cell membrane. Its subcellular location is the presynapse. The protein resides in the cytoskeleton. It is found in the membrane raft. The protein localises to the mitochondrion. The enzyme catalyses a 1,2-diacyl-sn-glycero-3-phospho-(1D-myo-inositol-4,5-bisphosphate) + H2O = a 1,2-diacyl-sn-glycero-3-phospho-(1D-myo-inositol 4-phosphate) + phosphate. Inositol 5-phosphatase which may be involved in distinct membrane trafficking and signal transduction pathways. May mediate the inhibitory effect of Rac1 on endocytosis. The chain is Synaptojanin-2 (Synj2) from Rattus norvegicus (Rat).